The following is a 121-amino-acid chain: Large ribosomal subunit protein bL12 (121 aa).

This sequence belongs to the bacterial ribosomal protein bL12 family. As to quaternary structure, homodimer. Part of the ribosomal stalk of the 50S ribosomal subunit. Forms a multimeric L10(L12)X complex, where L10 forms an elongated spine to which 2 to 4 L12 dimers bind in a sequential fashion. Binds GTP-bound translation factors.

In terms of biological role, forms part of the ribosomal stalk which helps the ribosome interact with GTP-bound translation factors. Is thus essential for accurate translation. The chain is Large ribosomal subunit protein bL12 from Acinetobacter baylyi (strain ATCC 33305 / BD413 / ADP1).